The chain runs to 339 residues: Glycerol-3-phosphate dehydrogenase [NAD(P)+] (339 aa).

Residues Ser-15, Tyr-16, His-36, and Lys-110 each coordinate NADPH. Positions 110, 139, and 141 each coordinate sn-glycerol 3-phosphate. Ala-143 is a binding site for NADPH. The sn-glycerol 3-phosphate site is built by Lys-195, Asp-248, Ser-258, Arg-259, and Asn-260. Lys-195 (proton acceptor) is an active-site residue. An NADPH-binding site is contributed by Arg-259. NADPH contacts are provided by Val-283 and Glu-285.

The protein belongs to the NAD-dependent glycerol-3-phosphate dehydrogenase family.

The protein resides in the cytoplasm. The catalysed reaction is sn-glycerol 3-phosphate + NAD(+) = dihydroxyacetone phosphate + NADH + H(+). It carries out the reaction sn-glycerol 3-phosphate + NADP(+) = dihydroxyacetone phosphate + NADPH + H(+). It functions in the pathway membrane lipid metabolism; glycerophospholipid metabolism. Catalyzes the reduction of the glycolytic intermediate dihydroxyacetone phosphate (DHAP) to sn-glycerol 3-phosphate (G3P), the key precursor for phospholipid synthesis. This Citrobacter koseri (strain ATCC BAA-895 / CDC 4225-83 / SGSC4696) protein is Glycerol-3-phosphate dehydrogenase [NAD(P)+].